Reading from the N-terminus, the 902-residue chain is Glutamate receptor 4 (902 aa).

Residues 1 to 20 (MRIICRQIVLLFSGFWGLAM) form the signal peptide. Topologically, residues 22-544 (AFPSSVQIGG…GVFSFLDPLA (523 aa)) are extracellular. Residues Asn52, Asn56, Asn258, Asn371, Asn407, and Asn414 are each glycosylated (N-linked (GlcNAc...) asparagine). Cys84 and Cys331 are disulfide-bonded. The L-glutamate site is built by Pro500, Thr502, and Arg507. The chain crosses the membrane as a helical span at residues 545 to 565 (YEIWMCIVFAYIGVSVVLFLV). The Cytoplasmic segment spans residues 566-592 (SRFSPYEWHTEEPEDGKEGPSDQPPNE). Positions 593–608 (FGIFNSLWFSLGAFMQ) form an intramembrane region, helical; Pore-forming. An intramembrane segment occupies 609 to 611 (QGC). Cys611 is lipidated: S-palmitoyl cysteine. The Cytoplasmic portion of the chain corresponds to 612 to 617 (DISPRS). A helical membrane pass occupies residues 618 to 638 (LSGRIVGGVWWFFTLIIISSY). Residues 639 to 813 (TANLAAFLTV…DKTSALSLSN (175 aa)) are Extracellular-facing. The L-glutamate site is built by Ser676, Thr677, and Glu727. A disulfide bridge links Cys740 with Cys795. Residues 814–834 (VAGVFYILVGGLGLAMLVALI) form a helical membrane-spanning segment. Topologically, residues 835–902 (EFCYKSRAEA…GLAVIASDLP (68 aa)) are cytoplasmic. Cys837 is lipidated: S-palmitoyl cysteine. Position 862 is a phosphoserine; by PKC/PRKCG (Ser862).

This sequence belongs to the glutamate-gated ion channel (TC 1.A.10.1) family. GRIA4 subfamily. Homotetramer or heterotetramer of pore-forming glutamate receptor subunits. Tetramers may be formed by the dimerization of dimers. Interacts with EPB41L1 via its C-terminus. Isoform 3 interacts with PICK1. Found in a complex with GRIA1, GRIA2, GRIA3, CNIH2, CNIH3, CACNG2, CACNG3, CACNG4, CACNG5, CACNG7 and CACNG8. Interacts with CACNG5 and PRKCG. Found in a complex with GRIA1, GRIA2, GRIA3, DLG4, CACNG8 and CNIH2. In terms of processing, palmitoylated. Depalmitoylated upon L-glutamate stimulation. ZDHHC3/GODZ specifically palmitoylates Cys-611, which leads to Golgi retention and decreased cell surface expression. In contrast, Cys-837 palmitoylation does not affect cell surface expression but regulates stimulation-dependent endocytosis. Post-translationally, phosphorylated at Ser-862 by PRKCG; phosphorylation increases plasma membrane-associated GRI4 expression. In terms of tissue distribution, detected in cerebellum.

The protein resides in the cell membrane. The protein localises to the postsynaptic cell membrane. Its subcellular location is the cell projection. It localises to the dendrite. The catalysed reaction is Ca(2+)(in) = Ca(2+)(out). The enzyme catalyses Na(+)(in) = Na(+)(out). It catalyses the reaction Mg(2+)(in) = Mg(2+)(out). Its function is as follows. Ionotropic glutamate receptor that functions as a ligand-gated cation channel, gated by L-glutamate and glutamatergic agonists such as alpha-amino-3-hydroxy-5-methyl-4-isoxazolepropionic acid (AMPA), quisqualic acid, and kainic acid. L-glutamate acts as an excitatory neurotransmitter at many synapses in the central nervous system and plays an important role in fast excitatory synaptic transmission. Binding of the excitatory neurotransmitter L-glutamate induces a conformation change, leading to the opening of the cation channel, and thereby converts the chemical signal to an electrical impulse upon entry of monovalent and divalent cations such as sodium and calcium. The receptor then desensitizes rapidly and enters a transient inactive state, characterized by the presence of bound agonist. In the presence of CACNG8, shows resensitization which is characterized by a delayed accumulation of current flux upon continued application of L-glutamate. The protein is Glutamate receptor 4 of Rattus norvegicus (Rat).